Consider the following 96-residue polypeptide: ATP-dependent Clp protease adapter protein ClpS (96 aa).

It belongs to the ClpS family. As to quaternary structure, binds to the N-terminal domain of the chaperone ClpA.

Its function is as follows. Involved in the modulation of the specificity of the ClpAP-mediated ATP-dependent protein degradation. The polypeptide is ATP-dependent Clp protease adapter protein ClpS (Campylobacter jejuni subsp. jejuni serotype O:6 (strain 81116 / NCTC 11828)).